Consider the following 306-residue polypeptide: Acetyl-coenzyme A carboxylase carboxyl transferase subunit beta (306 aa).

The 270-residue stretch at 27–296 (LWHKCPSCEA…PRFVAPVIEP (270 aa)) folds into the CoA carboxyltransferase N-terminal domain. Residues cysteine 31, cysteine 34, cysteine 50, and cysteine 53 each coordinate Zn(2+). Residues 31–53 (CPSCEAVLYRPELEKTLDVCPKC) form a C4-type zinc finger.

The protein belongs to the AccD/PCCB family. As to quaternary structure, acetyl-CoA carboxylase is a heterohexamer composed of biotin carboxyl carrier protein (AccB), biotin carboxylase (AccC) and two subunits each of ACCase subunit alpha (AccA) and ACCase subunit beta (AccD). Requires Zn(2+) as cofactor.

Its subcellular location is the cytoplasm. The enzyme catalyses N(6)-carboxybiotinyl-L-lysyl-[protein] + acetyl-CoA = N(6)-biotinyl-L-lysyl-[protein] + malonyl-CoA. It functions in the pathway lipid metabolism; malonyl-CoA biosynthesis; malonyl-CoA from acetyl-CoA: step 1/1. Functionally, component of the acetyl coenzyme A carboxylase (ACC) complex. Biotin carboxylase (BC) catalyzes the carboxylation of biotin on its carrier protein (BCCP) and then the CO(2) group is transferred by the transcarboxylase to acetyl-CoA to form malonyl-CoA. This Pseudomonas savastanoi pv. phaseolicola (strain 1448A / Race 6) (Pseudomonas syringae pv. phaseolicola (strain 1448A / Race 6)) protein is Acetyl-coenzyme A carboxylase carboxyl transferase subunit beta.